The sequence spans 434 residues: Serine hydroxymethyltransferase (434 aa).

Residues Leu133 and 137–139 each bind (6S)-5,6,7,8-tetrahydrofolate; that span reads GHL. Residue Lys242 is modified to N6-(pyridoxal phosphate)lysine.

It belongs to the SHMT family. In terms of assembly, homodimer. Requires pyridoxal 5'-phosphate as cofactor.

It is found in the cytoplasm. The catalysed reaction is (6R)-5,10-methylene-5,6,7,8-tetrahydrofolate + glycine + H2O = (6S)-5,6,7,8-tetrahydrofolate + L-serine. It functions in the pathway one-carbon metabolism; tetrahydrofolate interconversion. It participates in amino-acid biosynthesis; glycine biosynthesis; glycine from L-serine: step 1/1. Catalyzes the reversible interconversion of serine and glycine with tetrahydrofolate (THF) serving as the one-carbon carrier. This reaction serves as the major source of one-carbon groups required for the biosynthesis of purines, thymidylate, methionine, and other important biomolecules. Also exhibits THF-independent aldolase activity toward beta-hydroxyamino acids, producing glycine and aldehydes, via a retro-aldol mechanism. This Methylorubrum extorquens (strain CM4 / NCIMB 13688) (Methylobacterium extorquens) protein is Serine hydroxymethyltransferase.